We begin with the raw amino-acid sequence, 350 residues long: 4-hydroxy-3-methylbut-2-enyl diphosphate reductase (350 aa).

Cys-36 contacts [4Fe-4S] cluster. (2E)-4-hydroxy-3-methylbut-2-enyl diphosphate is bound by residues His-65 and His-101. Residues His-65 and His-101 each contribute to the dimethylallyl diphosphate site. Isopentenyl diphosphate is bound by residues His-65 and His-101. Cys-123 is a binding site for [4Fe-4S] cluster. His-151 contacts (2E)-4-hydroxy-3-methylbut-2-enyl diphosphate. Position 151 (His-151) interacts with dimethylallyl diphosphate. His-151 provides a ligand contact to isopentenyl diphosphate. Catalysis depends on Glu-153, which acts as the Proton donor. Thr-192 provides a ligand contact to (2E)-4-hydroxy-3-methylbut-2-enyl diphosphate. A [4Fe-4S] cluster-binding site is contributed by Cys-222. (2E)-4-hydroxy-3-methylbut-2-enyl diphosphate is bound by residues Ser-250, Ser-251, Asn-252, and Ser-295. Residues Ser-250, Ser-251, Asn-252, and Ser-295 each contribute to the dimethylallyl diphosphate site. Positions 250, 251, 252, and 295 each coordinate isopentenyl diphosphate.

The protein belongs to the IspH family. [4Fe-4S] cluster is required as a cofactor.

The enzyme catalyses isopentenyl diphosphate + 2 oxidized [2Fe-2S]-[ferredoxin] + H2O = (2E)-4-hydroxy-3-methylbut-2-enyl diphosphate + 2 reduced [2Fe-2S]-[ferredoxin] + 2 H(+). The catalysed reaction is dimethylallyl diphosphate + 2 oxidized [2Fe-2S]-[ferredoxin] + H2O = (2E)-4-hydroxy-3-methylbut-2-enyl diphosphate + 2 reduced [2Fe-2S]-[ferredoxin] + 2 H(+). The protein operates within isoprenoid biosynthesis; dimethylallyl diphosphate biosynthesis; dimethylallyl diphosphate from (2E)-4-hydroxy-3-methylbutenyl diphosphate: step 1/1. Its pathway is isoprenoid biosynthesis; isopentenyl diphosphate biosynthesis via DXP pathway; isopentenyl diphosphate from 1-deoxy-D-xylulose 5-phosphate: step 6/6. In terms of biological role, catalyzes the conversion of 1-hydroxy-2-methyl-2-(E)-butenyl 4-diphosphate (HMBPP) into a mixture of isopentenyl diphosphate (IPP) and dimethylallyl diphosphate (DMAPP). Acts in the terminal step of the DOXP/MEP pathway for isoprenoid precursor biosynthesis. This Rhizobium meliloti (strain 1021) (Ensifer meliloti) protein is 4-hydroxy-3-methylbut-2-enyl diphosphate reductase.